Reading from the N-terminus, the 372-residue chain is Lipoyl synthase, mitochondrial (372 aa).

The transit peptide at 1-27 (MSLRCGDAARTLGPRVFGRYFCSPVRP) directs the protein to the mitochondrion. [4Fe-4S] cluster is bound by residues C106, C111, C117, C137, C141, C144, and S352. The 220-residue stretch at 122 to 341 (EYATATATIM…EKVGNELGFH (220 aa)) folds into the Radical SAM core domain.

It belongs to the radical SAM superfamily. Lipoyl synthase family. [4Fe-4S] cluster serves as cofactor.

The protein localises to the mitochondrion. The enzyme catalyses [[Fe-S] cluster scaffold protein carrying a second [4Fe-4S](2+) cluster] + N(6)-octanoyl-L-lysyl-[protein] + 2 oxidized [2Fe-2S]-[ferredoxin] + 2 S-adenosyl-L-methionine + 4 H(+) = [[Fe-S] cluster scaffold protein] + N(6)-[(R)-dihydrolipoyl]-L-lysyl-[protein] + 4 Fe(3+) + 2 hydrogen sulfide + 2 5'-deoxyadenosine + 2 L-methionine + 2 reduced [2Fe-2S]-[ferredoxin]. It functions in the pathway protein modification; protein lipoylation via endogenous pathway; protein N(6)-(lipoyl)lysine from octanoyl-[acyl-carrier-protein]: step 2/2. Its function is as follows. Catalyzes the radical-mediated insertion of two sulfur atoms into the C-6 and C-8 positions of the octanoyl moiety bound to the lipoyl domains of lipoate-dependent enzymes, thereby converting the octanoylated domains into lipoylated derivatives. The protein is Lipoyl synthase, mitochondrial of Homo sapiens (Human).